The chain runs to 307 residues: Voltage-dependent anion channel-forming protein alr2987 (307 aa).

The next 4 helical transmembrane spans lie at 19–39 (VIGA…LVTL), 47–67 (VSQP…LLVF), 209–229 (PLAY…LLPF), and 238–258 (WTGL…AIGL).

It belongs to the anion channel-forming bestrophin (TC 1.A.46) family.

The protein localises to the cell membrane. The protein is Voltage-dependent anion channel-forming protein alr2987 of Nostoc sp. (strain PCC 7120 / SAG 25.82 / UTEX 2576).